The following is a 131-amino-acid chain: Single-stranded DNA-binding protein 2 (131 aa).

In terms of domain architecture, SSB spans 1-103 (MYNKVIMIGR…VLASSFQLLE (103 aa)). The Important for interaction with partner proteins motif lies at 126–131 (EEELPF).

Homotetramer.

Functionally, plays an important role in DNA replication, recombination and repair. Binds to ssDNA and to an array of partner proteins to recruit them to their sites of action during DNA metabolism. The protein is Single-stranded DNA-binding protein 2 (ssb2) of Streptococcus agalactiae serotype V (strain ATCC BAA-611 / 2603 V/R).